A 185-amino-acid chain; its full sequence is Ribosome-recycling factor (185 aa).

The protein belongs to the RRF family.

It is found in the cytoplasm. In terms of biological role, responsible for the release of ribosomes from messenger RNA at the termination of protein biosynthesis. May increase the efficiency of translation by recycling ribosomes from one round of translation to another. This chain is Ribosome-recycling factor, found in Wigglesworthia glossinidia brevipalpis.